The sequence spans 833 residues: Zinc transporter ZIP10 (833 aa).

The first 25 residues, 1-25 (MKVHIHTKFCLICLLTFIFHHCNHC), serve as a signal peptide directing secretion. Residues 30–48 (DHGPEELHRHHRGMTESES) show a composition bias toward basic and acidic residues. Disordered regions lie at residues 30-54 (DHGP…FSVQ) and 137-167 (AENH…IKAD). A compositionally biased stretch (polar residues) spans 137–147 (AENHTTTSVTS). A compositionally biased stretch (basic and acidic residues) spans 152–167 (KCDPEKEAAELPIKAD). N-linked (GlcNAc...) asparagine glycans are attached at residues N191 and N198. Positions 200 to 209 (SVAHSEHGEP) are enriched in basic and acidic residues. Disordered stretches follow at residues 200 to 257 (SVAH…NHDH) and 271 to 335 (RVHS…EDDR). A glycan (N-linked (GlcNAc...) asparagine) is linked at N218. Over residues 229–241 (VKVRRKEKGKRKK) the composition is skewed to basic residues. Basic and acidic residues-rich tracts occupy residues 281 to 315 (HLPE…EAPH) and 326 to 335 (SHKDQSEDDR). N341 is a glycosylation site (N-linked (GlcNAc...) asparagine). 2 helical membrane passes run 413 to 433 (IISI…VPII) and 440 to 460 (FLLT…ALLH). The disordered stretch occupies residues 466 to 485 (QGGHDHSHQHTHGHGHSHGH). The helical transmembrane segment at 497 to 517 (VLKGLVALGGIYLLFIIEHCI) threads the bilayer. Phosphothreonine occurs at positions 538 and 555. S593 carries the post-translational modification Phosphoserine. Transmembrane regions (helical) follow at residues 689–709 (AIGA…IAVF), 734–754 (IVYN…GTAV), 761–781 (ITLW…LVDM), and 803–823 (FILQ…IALY).

The protein belongs to the ZIP transporter (TC 2.A.5) family. Interacts with SLC39A6. This interaction triggers cells to undergo EMT and mitosis. Found in a complex with SLC39A6, SLC39A10 and with the 'Ser-727' phosphorylated form of STAT3 throughout mitosis. Found in a complex with SLC39A6, SLC39A10 and with NCAM1; this complex controls NCAM1 phosphorylation and integration into focal adhesion complexes during epithelial-tomesenchymal transition. Found in a complex with SLC39A6, SLC39A10 and with GSK3B that controls NCAM1 phosphorylation. In terms of processing, undergoes N-terminal ectodomain shedding. Expressed in the liver, kidney and brain.

The protein resides in the cell membrane. It localises to the apical cell membrane. It carries out the reaction Zn(2+)(in) = Zn(2+)(out). Zinc-influx transporter. When associated with SLC39A6, the heterodimer formed by SLC39A10 and SLC39A6 mediates cellular zinc uptake to trigger cells to undergo epithelial-to-mesenchymal transition (EMT). mediates cellular zinc uptake to trigger cells to undergo epithelial-to-mesenchymal transition (EMT). SLC39A10-SLC39A6 heterodimers play also an essentiel role in initiating mitosis by importing zinc into cells to initiate a pathway resulting in the onset of mitosis. Plays an important for both mature B-cell maintenance and humoral immune responses. When associated with SLC39A10, the heterodimer controls NCAM1 phosphorylation and integration into focal adhesion complexes during EMT. The protein is Zinc transporter ZIP10 of Mus musculus (Mouse).